Reading from the N-terminus, the 355-residue chain is 3-dehydroquinate synthase (355 aa).

NAD(+)-binding positions include 106–110 (GVVGD), 130–131 (TS), Lys143, and Lys152. Zn(2+)-binding residues include Glu185, His246, and His262.

This sequence belongs to the sugar phosphate cyclases superfamily. Dehydroquinate synthase family. Co(2+) serves as cofactor. It depends on Zn(2+) as a cofactor. Requires NAD(+) as cofactor.

The protein localises to the cytoplasm. It carries out the reaction 7-phospho-2-dehydro-3-deoxy-D-arabino-heptonate = 3-dehydroquinate + phosphate. It functions in the pathway metabolic intermediate biosynthesis; chorismate biosynthesis; chorismate from D-erythrose 4-phosphate and phosphoenolpyruvate: step 2/7. Catalyzes the conversion of 3-deoxy-D-arabino-heptulosonate 7-phosphate (DAHP) to dehydroquinate (DHQ). The sequence is that of 3-dehydroquinate synthase from Latilactobacillus sakei subsp. sakei (strain 23K) (Lactobacillus sakei subsp. sakei).